The sequence spans 688 residues: Elongation factor G (688 aa).

The tr-type G domain maps to 8-282 (EKFRNFGIMA…GVVDYLPSPL (275 aa)). Residues 17–24 (AHIDAGKT), 81–85 (DTPGH), and 135–138 (NKMD) each bind GTP.

Belongs to the TRAFAC class translation factor GTPase superfamily. Classic translation factor GTPase family. EF-G/EF-2 subfamily.

The protein localises to the cytoplasm. Catalyzes the GTP-dependent ribosomal translocation step during translation elongation. During this step, the ribosome changes from the pre-translocational (PRE) to the post-translocational (POST) state as the newly formed A-site-bound peptidyl-tRNA and P-site-bound deacylated tRNA move to the P and E sites, respectively. Catalyzes the coordinated movement of the two tRNA molecules, the mRNA and conformational changes in the ribosome. The protein is Elongation factor G of Clostridium perfringens (strain ATCC 13124 / DSM 756 / JCM 1290 / NCIMB 6125 / NCTC 8237 / Type A).